A 390-amino-acid chain; its full sequence is Type II methyltransferase M.SacI (390 aa).

Positions 5 to 371 (LPVISLFSGA…RALMEQLGYL (367 aa)) constitute an SAM-dependent MTase C5-type domain. Residue cysteine 96 is part of the active site.

The protein belongs to the class I-like SAM-binding methyltransferase superfamily. C5-methyltransferase family.

The catalysed reaction is a 2'-deoxycytidine in DNA + S-adenosyl-L-methionine = a 5-methyl-2'-deoxycytidine in DNA + S-adenosyl-L-homocysteine + H(+). A beta methylase recognizes the double-stranded sequence 5'-GAGCTC-3', methylates C-4 on both strands, and protects the DNA from cleavage by the SacI endonuclease. The sequence is that of Type II methyltransferase M.SacI from Streptomyces achromogenes.